The primary structure comprises 279 residues: Tryptophan synthase alpha chain (279 aa).

Active-site proton acceptor residues include Glu50 and Asp61.

It belongs to the TrpA family. Tetramer of two alpha and two beta chains.

It carries out the reaction (1S,2R)-1-C-(indol-3-yl)glycerol 3-phosphate + L-serine = D-glyceraldehyde 3-phosphate + L-tryptophan + H2O. The protein operates within amino-acid biosynthesis; L-tryptophan biosynthesis; L-tryptophan from chorismate: step 5/5. Its function is as follows. The alpha subunit is responsible for the aldol cleavage of indoleglycerol phosphate to indole and glyceraldehyde 3-phosphate. The chain is Tryptophan synthase alpha chain from Allorhizobium ampelinum (strain ATCC BAA-846 / DSM 112012 / S4) (Agrobacterium vitis (strain S4)).